Here is a 286-residue protein sequence, read N- to C-terminus: Protease HtpX homolog (286 aa).

2 helical membrane-spanning segments follow: residues 7–27 and 29–49; these read TFML…MIGG and SGMM…YWFS. Zn(2+) is bound at residue histidine 131. Glutamate 132 is an active-site residue. Histidine 135 contributes to the Zn(2+) binding site. The next 2 membrane-spanning stretches (helical) occupy residues 146–166 and 177–197; these read LSAT…FFGG and IAGI…QMAI. Glutamate 202 is a binding site for Zn(2+).

This sequence belongs to the peptidase M48B family. Zn(2+) serves as cofactor.

The protein localises to the cell inner membrane. In Ralstonia nicotianae (strain ATCC BAA-1114 / GMI1000) (Ralstonia solanacearum), this protein is Protease HtpX homolog.